A 146-amino-acid chain; its full sequence is Probable NADH dehydrogenase [ubiquinone] 1 alpha subcomplex subunit 12 (146 aa).

It belongs to the complex I NDUFA12 subunit family. Complex I is composed of 45 different subunits.

The protein localises to the mitochondrion inner membrane. In terms of biological role, accessory subunit of the mitochondrial membrane respiratory chain NADH dehydrogenase (Complex I), that is believed not to be involved in catalysis. Complex I functions in the transfer of electrons from NADH to the respiratory chain. The immediate electron acceptor for the enzyme is believed to be ubiquinone. The protein is Probable NADH dehydrogenase [ubiquinone] 1 alpha subcomplex subunit 12 of Caenorhabditis elegans.